A 225-amino-acid chain; its full sequence is pH-response regulator palI/RIM9 homolog 2 (225 aa).

The Cytoplasmic portion of the chain corresponds to 1 to 4 (MLVK). Residues 5-25 (IVLVVLLTLALVFECFSTISV) form a helical membrane-spanning segment. At 26 to 87 (PITIGLYISE…PNHAKYALSN (62 aa)) the chain is on the extracellular side. The chain crosses the membrane as a helical span at residues 88 to 108 (LLLVHVLAFVCVTILWVFGML). Residues 109 to 120 (TCFRCIKTSRRM) lie on the Cytoplasmic side of the membrane. Residues 121 to 141 (LIIAVLWSMLTFMVTLLGFLI) form a helical membrane-spanning segment. Residues 142–153 (DILIFSSHVTWC) are Extracellular-facing. Residues 154 to 174 (TWLTLASAFFTVLSGTVLCVM) form a helical membrane-spanning segment. Residues 175-225 (RRNLTYDKFLESKPEKHGVYVPLCRLNDVEELEIPWCNTMNHQALTAPTPM) are Cytoplasmic-facing.

The protein belongs to the palI/RIM9 family.

The protein resides in the cell membrane. Its function is as follows. Required for the proteolytic cleavage of the transcription factor RIM101 in response to alkaline ambient pH. The protein is pH-response regulator palI/RIM9 homolog 2 of Kluyveromyces lactis (strain ATCC 8585 / CBS 2359 / DSM 70799 / NBRC 1267 / NRRL Y-1140 / WM37) (Yeast).